Consider the following 352-residue polypeptide: UDP-N-acetylglucosamine--N-acetylmuramyl-(pentapeptide) pyrophosphoryl-undecaprenol N-acetylglucosamine transferase (352 aa).

2 residues coordinate UDP-N-acetyl-alpha-D-glucosamine: serine 195 and glutamine 287.

This sequence belongs to the glycosyltransferase 28 family. MurG subfamily.

The protein localises to the cell membrane. It carries out the reaction Mur2Ac(oyl-L-Ala-gamma-D-Glu-L-Lys-D-Ala-D-Ala)-di-trans,octa-cis-undecaprenyl diphosphate + UDP-N-acetyl-alpha-D-glucosamine = beta-D-GlcNAc-(1-&gt;4)-Mur2Ac(oyl-L-Ala-gamma-D-Glu-L-Lys-D-Ala-D-Ala)-di-trans,octa-cis-undecaprenyl diphosphate + UDP + H(+). The protein operates within cell wall biogenesis; peptidoglycan biosynthesis. Functionally, cell wall formation. Catalyzes the transfer of a GlcNAc subunit on undecaprenyl-pyrophosphoryl-MurNAc-pentapeptide (lipid intermediate I) to form undecaprenyl-pyrophosphoryl-MurNAc-(pentapeptide)GlcNAc (lipid intermediate II). This chain is UDP-N-acetylglucosamine--N-acetylmuramyl-(pentapeptide) pyrophosphoryl-undecaprenol N-acetylglucosamine transferase, found in Streptococcus pneumoniae (strain 70585).